We begin with the raw amino-acid sequence, 802 residues long: Ribosome-releasing factor 2, mitochondrial (802 aa).

One can recognise a tr-type G domain in the interval 13-297 (KKIRNIGIIA…AVVDFLPSPA (285 aa)). Residues 22–29 (AHIDAGKT), 86–90 (DTPGH), and 140–143 (NKMD) contribute to the GTP site.

Belongs to the TRAFAC class translation factor GTPase superfamily. Classic translation factor GTPase family. EF-G/EF-2 subfamily.

Its subcellular location is the mitochondrion. Its function is as follows. Mitochondrial GTPase that mediates the disassembly of ribosomes from messenger RNA at the termination of mitochondrial protein biosynthesis. Not involved in the GTP-dependent ribosomal translocation step during translation elongation. The protein is Ribosome-releasing factor 2, mitochondrial of Yarrowia lipolytica (strain CLIB 122 / E 150) (Yeast).